Reading from the N-terminus, the 314-residue chain is tRNA dimethylallyltransferase 1 (314 aa).

8–15 (GPTGSGKS) is an ATP binding site. Position 10-15 (10-15 (TGSGKS)) interacts with substrate.

The protein belongs to the IPP transferase family. Monomer. Mg(2+) serves as cofactor.

The enzyme catalyses adenosine(37) in tRNA + dimethylallyl diphosphate = N(6)-dimethylallyladenosine(37) in tRNA + diphosphate. Functionally, catalyzes the transfer of a dimethylallyl group onto the adenine at position 37 in tRNAs that read codons beginning with uridine, leading to the formation of N6-(dimethylallyl)adenosine (i(6)A). The chain is tRNA dimethylallyltransferase 1 from Mycobacterium ulcerans (strain Agy99).